A 291-amino-acid chain; its full sequence is 4-diphosphocytidyl-2-C-methyl-D-erythritol kinase (291 aa).

Lys-8 is a catalytic residue. Position 89 to 99 (89 to 99 (PIGSGIGGGSS)) interacts with ATP. Asp-131 is a catalytic residue.

The protein belongs to the GHMP kinase family. IspE subfamily.

It catalyses the reaction 4-CDP-2-C-methyl-D-erythritol + ATP = 4-CDP-2-C-methyl-D-erythritol 2-phosphate + ADP + H(+). It participates in isoprenoid biosynthesis; isopentenyl diphosphate biosynthesis via DXP pathway; isopentenyl diphosphate from 1-deoxy-D-xylulose 5-phosphate: step 3/6. Functionally, catalyzes the phosphorylation of the position 2 hydroxy group of 4-diphosphocytidyl-2C-methyl-D-erythritol. This Chlamydia abortus (strain DSM 27085 / S26/3) (Chlamydophila abortus) protein is 4-diphosphocytidyl-2-C-methyl-D-erythritol kinase.